A 376-amino-acid chain; its full sequence is Multiphosphoryl transfer protein (376 aa).

Residues 2–142 enclose the PTS EIIA type-2 domain; it reads FQLSVQDIHP…EELRALLMGE (141 aa). H62 functions as the Tele-phosphohistidine intermediate; for EIIA activity in the catalytic mechanism. Residue H62 is modified to Phosphohistidine; by HPr. Positions 156–284 are m domain; the sequence is TLDIVASDLL…LTSDDAPTDD (129 aa). Positions 285–375 constitute an HPr domain; the sequence is VLSAEFVVRN…DAIAAGLGEG (91 aa). The active-site Pros-phosphohistidine intermediate; for HPr activity is H299. Phosphohistidine; by EI is present on H299.

Its subcellular location is the cytoplasm. The phosphoenolpyruvate-dependent sugar phosphotransferase system (sugar PTS), a major carbohydrate active transport system, catalyzes the phosphorylation of incoming sugar substrates concomitantly with their translocation across the cell membrane. The enzyme II FruAB PTS system is involved in fructose transport. In Escherichia coli O157:H7, this protein is Multiphosphoryl transfer protein.